An 872-amino-acid chain; its full sequence is Alanine--tRNA ligase (872 aa).

Zn(2+) is bound by residues histidine 567, histidine 571, cysteine 669, and histidine 673.

It belongs to the class-II aminoacyl-tRNA synthetase family. It depends on Zn(2+) as a cofactor.

It is found in the cytoplasm. The enzyme catalyses tRNA(Ala) + L-alanine + ATP = L-alanyl-tRNA(Ala) + AMP + diphosphate. Functionally, catalyzes the attachment of alanine to tRNA(Ala) in a two-step reaction: alanine is first activated by ATP to form Ala-AMP and then transferred to the acceptor end of tRNA(Ala). Also edits incorrectly charged Ser-tRNA(Ala) and Gly-tRNA(Ala) via its editing domain. The polypeptide is Alanine--tRNA ligase (Streptococcus pyogenes serotype M28 (strain MGAS6180)).